A 226-amino-acid polypeptide reads, in one-letter code: Triosephosphate isomerase (226 aa).

12 to 14 is a binding site for substrate; that stretch reads NFK. His96 acts as the Electrophile in catalysis. Glu144 serves as the catalytic Proton acceptor. Residues Ile149, Gly184, and 205 to 206 each bind substrate; that span reads AS.

It belongs to the triosephosphate isomerase family. Homotetramer; dimer of dimers.

It is found in the cytoplasm. The enzyme catalyses D-glyceraldehyde 3-phosphate = dihydroxyacetone phosphate. Its pathway is carbohydrate biosynthesis; gluconeogenesis. It functions in the pathway carbohydrate degradation; glycolysis; D-glyceraldehyde 3-phosphate from glycerone phosphate: step 1/1. Functionally, involved in the gluconeogenesis. Catalyzes stereospecifically the conversion of dihydroxyacetone phosphate (DHAP) to D-glyceraldehyde-3-phosphate (G3P). The sequence is that of Triosephosphate isomerase from Thermococcus kodakarensis (strain ATCC BAA-918 / JCM 12380 / KOD1) (Pyrococcus kodakaraensis (strain KOD1)).